A 564-amino-acid polypeptide reads, in one-letter code: Ferric/cupric reductase transmembrane component 2 (564 aa).

Transmembrane regions (helical) follow at residues 10-30 (TLGS…LFLL) and 66-86 (FIFL…LVML). Asn-106 carries an N-linked (GlcNAc...) asparagine glycan. A helical membrane pass occupies residues 110–130 (VAARLGYLSCGLFFVSYFFSL). The 116-residue stretch at 114 to 229 (LGYLSCGLFF…TCSVLIIFLI (116 aa)) folds into the Ferric oxidoreductase domain. Heme contacts are provided by His-150 and His-164. A run of 3 helical transmembrane segments spans residues 152–172 (WLSV…MIFS), 184–204 (ISIY…ASLP), and 210–230 (FFEW…FLIW). Positions 218 and 232 each coordinate heme. The FAD-binding FR-type domain occupies 254–410 (RLFRSIWNRS…DGPYGTTSNV (157 aa)). The N-linked (GlcNAc...) asparagine glycan is linked to Asn-261. FAD is bound at residue 310–316 (HPFTLAS). An N-linked (GlcNAc...) asparagine glycan is attached at Asn-350. Residue 419 to 427 (LIAGGVGFS) participates in NAD(+) binding. Asn-442, Asn-496, and Asn-548 each carry an N-linked (GlcNAc...) asparagine glycan.

The protein belongs to the ferric reductase (FRE) family. FAD is required as a cofactor. It depends on heme as a cofactor.

The protein localises to the cell membrane. It is found in the endoplasmic reticulum membrane. It catalyses the reaction 2 a Fe(II)-siderophore + NADP(+) + H(+) = 2 a Fe(III)-siderophore + NADPH. Its function is as follows. Metalloreductase responsible for reducing extracellular iron and copper prior to import. Catalyzes the reductive uptake of Fe(3+)-salts and Fe(3+) bound to catecholate or hydroxamate siderophores. Fe(3+) is reduced to Fe(2+), which then dissociates from the siderophore and can be imported by the high-affinity Fe(2+) transport complex in the plasma membrane. Also participates in Cu(2+) reduction and Cu(+) uptake. This Schizosaccharomyces pombe (strain 972 / ATCC 24843) (Fission yeast) protein is Ferric/cupric reductase transmembrane component 2 (frp2).